Reading from the N-terminus, the 138-residue chain is NADH dehydrogenase [ubiquinone] iron-sulfur protein 2, mitochondrial (138 aa).

This sequence belongs to the complex I 49 kDa subunit family. Core subunit of respiratory chain NADH dehydrogenase (Complex I) which is composed of 45 different subunits. Component of the iron-sulfur (IP) fragment of the enzyme. Interacts with NDUFAF3. Interacts with NDUFAF7. Interacts with CERS2. The cofactor is [4Fe-4S] cluster. Post-translationally, dimethylation at Arg-118 by NDUFAF7 takes place after NDUFS2 assembles into the complex I, leading to stabilize the early intermediate complex.

The protein localises to the mitochondrion inner membrane. It carries out the reaction a ubiquinone + NADH + 5 H(+)(in) = a ubiquinol + NAD(+) + 4 H(+)(out). Its function is as follows. Core subunit of the mitochondrial membrane respiratory chain NADH dehydrogenase (Complex I) which catalyzes electron transfer from NADH through the respiratory chain, using ubiquinone as an electron acceptor. Essential for the catalytic activity and assembly of complex I. Redox-sensitive, critical component of the oxygen-sensing pathway in the pulmonary vasculature which plays a key role in acute pulmonary oxygen-sensing and hypoxic pulmonary vasoconstriction. Plays an important role in carotid body sensing of hypoxia. Essential for glia-like neural stem and progenitor cell proliferation, differentiation and subsequent oligodendrocyte or neuronal maturation. The polypeptide is NADH dehydrogenase [ubiquinone] iron-sulfur protein 2, mitochondrial (Mesocricetus auratus (Golden hamster)).